The primary structure comprises 412 residues: Serine hydroxymethyltransferase (412 aa).

Residues leucine 114 and glycine 118–leucine 120 each bind (6S)-5,6,7,8-tetrahydrofolate. At lysine 223 the chain carries N6-(pyridoxal phosphate)lysine.

The protein belongs to the SHMT family. As to quaternary structure, homodimer. It depends on pyridoxal 5'-phosphate as a cofactor.

Its subcellular location is the cytoplasm. The enzyme catalyses (6R)-5,10-methylene-5,6,7,8-tetrahydrofolate + glycine + H2O = (6S)-5,6,7,8-tetrahydrofolate + L-serine. Its pathway is one-carbon metabolism; tetrahydrofolate interconversion. The protein operates within amino-acid biosynthesis; glycine biosynthesis; glycine from L-serine: step 1/1. Functionally, catalyzes the reversible interconversion of serine and glycine with tetrahydrofolate (THF) serving as the one-carbon carrier. This reaction serves as the major source of one-carbon groups required for the biosynthesis of purines, thymidylate, methionine, and other important biomolecules. Also exhibits THF-independent aldolase activity toward beta-hydroxyamino acids, producing glycine and aldehydes, via a retro-aldol mechanism. This Mesoplasma florum (strain ATCC 33453 / NBRC 100688 / NCTC 11704 / L1) (Acholeplasma florum) protein is Serine hydroxymethyltransferase.